The primary structure comprises 223 residues: MATPAVKVYGWAISPFVSRALLALEEAGVDYELVPMSRQDGDHRRPEHLARNPFGKVPVLEDGDLTLFESRAIARHVLRKHKPELLGGGRLEQTAMVDVWLEVEAHQLSPPAIAIVVECVFAPFLGRERNQAVVDENVEKLKKVLEVYEARLATCTYLAGDFLSLADLSPFTIMHCLMATEYAALVHALPHVSAWWQGLAARPAANKVAQFMPVGAGAPKEQE.

Position 2 is a blocked amino end (Ala) (A2). The 82-residue stretch at 4–85 (PAVKVYGWAI…HVLRKHKPEL (82 aa)) folds into the GST N-terminal domain. Glutathione is bound by residues S14, 43–44 (HR), 56–57 (KV), and 69–70 (ES). The GST C-terminal domain occupies 90–223 (RLEQTAMVDV…VGAGAPKEQE (134 aa)).

It belongs to the GST superfamily. Phi family. In terms of assembly, homodimer or heterodimer of GST-I and GST-IV (=GST-II). As to expression, seedling roots.

It carries out the reaction RX + glutathione = an S-substituted glutathione + a halide anion + H(+). Functionally, conjugation of reduced glutathione to a wide number of exogenous and endogenous hydrophobic electrophiles. Involved in the detoxification of certain herbicides. Most active with substrates possessing a chloroacetamide structure. Trans-cinnamic acid and 1-chloro-2,4-dinitrobenzene are not effective substrates. May play an important role in the benoxacor-mediated protection of maize from metolachlor injury. This is Glutathione S-transferase 4 (GST4) from Zea mays (Maize).